Here is a 186-residue protein sequence, read N- to C-terminus: LIM domain-containing protein DDB_G0271356 (186 aa).

3 consecutive LIM zinc-binding domains span residues 7–67, 68–127, and 128–186; these read PECY…DKFA, PKCQ…KIGF, and LCRH…KLYG.

This is LIM domain-containing protein DDB_G0271356 from Dictyostelium discoideum (Social amoeba).